Here is a 296-residue protein sequence, read N- to C-terminus: Acetylglutamate kinase (296 aa).

Substrate contacts are provided by residues 67-68 (GG), arginine 89, and asparagine 194.

It belongs to the acetylglutamate kinase family. ArgB subfamily.

Its subcellular location is the cytoplasm. It catalyses the reaction N-acetyl-L-glutamate + ATP = N-acetyl-L-glutamyl 5-phosphate + ADP. It participates in amino-acid biosynthesis; L-arginine biosynthesis; N(2)-acetyl-L-ornithine from L-glutamate: step 2/4. Its function is as follows. Catalyzes the ATP-dependent phosphorylation of N-acetyl-L-glutamate. This Syntrophus aciditrophicus (strain SB) protein is Acetylglutamate kinase.